The sequence spans 121 residues: Large ribosomal subunit protein bL12 (121 aa).

The protein belongs to the bacterial ribosomal protein bL12 family. Homodimer. Part of the ribosomal stalk of the 50S ribosomal subunit. Forms a multimeric L10(L12)X complex, where L10 forms an elongated spine to which 2 to 4 L12 dimers bind in a sequential fashion. Binds GTP-bound translation factors.

Its function is as follows. Forms part of the ribosomal stalk which helps the ribosome interact with GTP-bound translation factors. Is thus essential for accurate translation. This Pelagibacter ubique (strain HTCC1062) protein is Large ribosomal subunit protein bL12.